A 72-amino-acid chain; its full sequence is uncharacterized protein (72 aa).

The chain crosses the membrane as a helical span at residues alanine 46–valine 66.

It localises to the membrane. This is an uncharacterized protein from Saccharomyces cerevisiae (strain ATCC 204508 / S288c) (Baker's yeast).